Here is a 644-residue protein sequence, read N- to C-terminus: Core protein VP4 (644 aa).

The protein belongs to the orbivirus VP4 family.

Its subcellular location is the virion. In terms of biological role, the VP4 protein is one of the five proteins (with VP1, VP3, VP6 and VP7) which form the inner capsid of the virus. In Antilocapra americana (Pronghorn), this protein is Core protein VP4 (Segment-4).